The sequence spans 229 residues: Somatolactin (229 aa).

A signal peptide spans 1 to 24 (MHLVSVIQRGVWAVLLWPNLLASS). Cystine bridges form between C29–C39, C87–C203, and C220–C228. N143 and N175 each carry an N-linked (GlcNAc...) asparagine glycan.

It belongs to the somatotropin/prolactin family.

It localises to the secreted. In Cyclopterus lumpus (Lumpsucker), this protein is Somatolactin.